Here is a 38-residue protein sequence, read N- to C-terminus: MIEPLVLGLVMGLVPITLAGLFVAAYLQYKRGNQLNLD.

A helical transmembrane segment spans residues 5-25 (LVLGLVMGLVPITLAGLFVAA).

It belongs to the PetG family. In terms of assembly, the 4 large subunits of the cytochrome b6-f complex are cytochrome b6, subunit IV (17 kDa polypeptide, PetD), cytochrome f and the Rieske protein, while the 4 small subunits are PetG, PetL, PetM and PetN. The complex functions as a dimer.

It is found in the cellular thylakoid membrane. Functionally, component of the cytochrome b6-f complex, which mediates electron transfer between photosystem II (PSII) and photosystem I (PSI), cyclic electron flow around PSI, and state transitions. PetG is required for either the stability or assembly of the cytochrome b6-f complex. This Gloeothece citriformis (strain PCC 7424) (Cyanothece sp. (strain PCC 7424)) protein is Cytochrome b6-f complex subunit 5.